A 106-amino-acid polypeptide reads, in one-letter code: NADH dehydrogenase [ubiquinone] 1 beta subcomplex subunit 9 (106 aa).

It belongs to the complex I LYR family. In terms of assembly, complex I is composed of about 45 different subunits.

It localises to the mitochondrion inner membrane. Its function is as follows. Accessory subunit of the mitochondrial membrane respiratory chain NADH dehydrogenase (Complex I), that is believed to be not involved in catalysis. Complex I functions in the transfer of electrons from NADH to the respiratory chain. The immediate electron acceptor for the enzyme is believed to be ubiquinone. In Dictyostelium discoideum (Social amoeba), this protein is NADH dehydrogenase [ubiquinone] 1 beta subcomplex subunit 9 (ndufb9).